The sequence spans 149 residues: Transcriptional repressor NrdR (149 aa).

The segment at 3–34 (CPFCFAVDTKVIDSRLVGEGSSVRRRRQCLVC) is a zinc-finger region. The 91-residue stretch at 49 to 139 (PRVVKSNDVR…VYRSFEDIKE (91 aa)) folds into the ATP-cone domain.

This sequence belongs to the NrdR family. Requires Zn(2+) as cofactor.

Its function is as follows. Negatively regulates transcription of bacterial ribonucleotide reductase nrd genes and operons by binding to NrdR-boxes. This is Transcriptional repressor NrdR from Shigella flexneri.